A 425-amino-acid polypeptide reads, in one-letter code: Trigger factor (425 aa).

Residues Gly-163–Pro-248 enclose the PPIase FKBP-type domain.

This sequence belongs to the FKBP-type PPIase family. Tig subfamily.

The protein resides in the cytoplasm. It catalyses the reaction [protein]-peptidylproline (omega=180) = [protein]-peptidylproline (omega=0). In terms of biological role, involved in protein export. Acts as a chaperone by maintaining the newly synthesized protein in an open conformation. Functions as a peptidyl-prolyl cis-trans isomerase. This Bacillus cereus (strain G9842) protein is Trigger factor.